A 589-amino-acid polypeptide reads, in one-letter code: Progranulin (589 aa).

The signal sequence occupies residues 1 to 17 (MWVLMSWLAFAAGLVAG). Residue asparagine 38 is glycosylated (N-linked (GlcNAc...) asparagine). 2 disulfide bridges follow: cysteine 125/cysteine 138 and cysteine 132/cysteine 148. The N-linked (GlcNAc...) asparagine glycan is linked to asparagine 263. Intrachain disulfides connect cysteine 282/cysteine 294, cysteine 288/cysteine 304, cysteine 295/cysteine 312, cysteine 305/cysteine 319, cysteine 313/cysteine 326, cysteine 320/cysteine 333, cysteine 364/cysteine 376, cysteine 370/cysteine 386, cysteine 395/cysteine 408, and cysteine 402/cysteine 414. Asparagine 373 is a glycosylation site (N-linked (GlcNAc...) asparagine). Asparagine 526 carries an N-linked (GlcNAc...) asparagine glycan.

The protein belongs to the granulin family. In terms of assembly, progranulin is secreted as a homodimer. Interacts with SLPI; interaction protects progranulin from proteolysis. Interacts (via region corresponding to granulin-7 peptide) with CTSD; stabilizes CTSD and increases its proteolytic activity. Interacts (via region corresponding to granulin-7 peptide) with SORT1; this interaction mediates endocytosis and lysosome delivery of progranulin; interaction occurs at the neuronal cell surface in a stressed nervous system. Interacts with PSAP; facilitates lysosomal delivery of progranulin from the extracellular space and the biosynthetic pathway. Forms a complex with PSAP and M6PR; PSAP bridges the binding between progranulin and M6PR. Forms a complex with PSAP and SORT1; progranulin bridges the interaction between PSAP and SORT1; facilitates lysosomal targeting of PSAP via SORT1; interaction enhances PSAP uptake in primary cortical neurons. Interacts (via regions corresponding to granulin-2 and granulin-7 peptides) with GBA1; this interaction prevents aggregation of GBA1-SCARB2 complex via interaction with HSPA1A upon stress. Interacts (via region corresponding to granulin-7 peptide) with HSPA1A; mediates recruitment of HSPA1A to GBA1 and prevents GBA1 aggregation in response to stress. In terms of processing, N-glycosylated. Cleaved by ELANE; proteolysis is blocked by SLPI and is concentration- and time-dependent and induces CXCL8/IL-8 production; granulin-3 and granulin-4 are resistant to ELANE. Cleaved by CTSL in lysosome thus regulating the maturation and turnover of progranulin within the lysosome. In terms of tissue distribution, highly expressed at the wound site and diminishes away from the wound. Not expressed in fibroblasts and endothelial cells in intact skin. In adult brain, expressed primarily in neurons and in resting and reactive microglia. Expressed in both neurons and microglia. Highly expressed in activated microglia in response to injury. Expressed in macrophage.

The protein resides in the secreted. The protein localises to the lysosome. Functionally, secreted protein that acts as a key regulator of lysosomal function and as a growth factor involved in inflammation, wound healing and cell proliferation. Regulates protein trafficking to lysosomes, and also the activity of lysosomal enzymes. Also facilitates the acidification of lysosomes, causing degradation of mature CTSD by CTSB. In addition, functions as a wound-related growth factor that acts directly on dermal fibroblasts and endothelial cells to promote division, migration and the formation of capillary-like tubule structures. Also promotes epithelial cell proliferation by blocking TNF-mediated neutrophil activation preventing release of oxidants and proteases. Moreover, modulates inflammation in neurons by preserving neurons survival, axonal outgrowth and neuronal integrity. Inhibits epithelial cell proliferation and induces epithelial cells to secrete IL-8. Its function is as follows. Stabilizes CTSD through interaction with CTSD leading to maintain its aspartic-type peptidase activity. This Mus musculus (Mouse) protein is Progranulin (Grn).